An 834-amino-acid chain; its full sequence is Protein argonaute (834 aa).

In terms of domain architecture, PAZ spans 210 to 326 (SLLQILMEYT…LPIEFCFVVK (117 aa)). The 300-residue stretch at 500–799 (YLFFILDKNS…VSNLARYQDV (300 aa)) folds into the Piwi domain.

It belongs to the argonaute family. Ago subfamily. Ago1, chp1 and tas3 interact to form the core of the RNA-induced transcriptional silencing (RITS) complex. The RITS complex interacts with the RDRC complex via interaction between ago1 and hrr1. Clr4 has a role in mediating this interaction. Component of the argonaute siRNA chaperone (ARC) complex composed of ago1, arb1 and arb2. Interacts with arb1.

The protein resides in the cytoplasm. It localises to the nucleus. It is found in the chromosome. The protein localises to the centromere. Its subcellular location is the telomere. Its function is as follows. Required for G1 arrest and mating in response to nitrogen starvation. Ago1 regulation of cytokinesis and cell cycle checkpoints occurs downstream of dcr1. Required, indirectly, for regulated hyperphosphorylation of cdc2. Has a role in the RNA interference (RNAi) pathway which is important for heterochromatin formation, accurate chromosome segregation, centromere cohesion and telomere function during mitosis and meiosis. Required for silencing at the centromeres and for initiation of transcriptionally silent heterochromatin at the mating type locus. Promotes histone H3K9 methylation necessary for centromere function. Required for recruitment of swi6 and cohesin to an ectopic dg repeat. A member of the RNA-induced transcriptional silencing (RITS) complex which is involved in the biosynthesis of dsRNA from primer siRNAs provided by the RNA-directed RNA polymerase (RDRC) complex. Has ribonuclease H-like cleavage (slicing) activity towards target messages complementary to siRNA and can direct site-specific cleavage of RNA substrates via siRNA. Slicing activity is required for both post-transcriptional and transcriptional gene silencing as well as for histone H3 'Lys-10' methylation spreading, conversion of double-stranded siRNA to single-stranded siRNA and siRNA-dependent association of ago1 with chromatin. A member of the argonaute siRNA chaperone (ARC) complex which is required for histone H3K9 methylation, heterochromatin assembly and siRNA generation. The ARC complex contains mostly double-stranded siRNA. The chain is Protein argonaute (ago1) from Schizosaccharomyces pombe (strain 972 / ATCC 24843) (Fission yeast).